A 240-amino-acid polypeptide reads, in one-letter code: Ribosomal RNA small subunit methyltransferase J (240 aa).

S-adenosyl-L-methionine contacts are provided by residues 93–94 (RD) and D162.

The protein belongs to the methyltransferase superfamily. RsmJ family.

The protein resides in the cytoplasm. The catalysed reaction is guanosine(1516) in 16S rRNA + S-adenosyl-L-methionine = N(2)-methylguanosine(1516) in 16S rRNA + S-adenosyl-L-homocysteine + H(+). Specifically methylates the guanosine in position 1516 of 16S rRNA. In Francisella philomiragia subsp. philomiragia (strain ATCC 25017 / CCUG 19701 / FSC 153 / O#319-036), this protein is Ribosomal RNA small subunit methyltransferase J.